The sequence spans 962 residues: Probable transport protein MmpL9 (962 aa).

12 helical membrane passes run 25-45, 201-223, 225-247, 256-276, 302-322, 335-355, 383-403, 768-788, 796-816, 820-840, 867-887, and 895-915; these read LAAIPILLCWLGFTVFVSVAV, LITGLTFAVITVLLLLVYRSIAT, LLILPMVFIGLGATRGTIAFLGY, FVVNILTALAIAAGTDYAIFL, ANVILGSGLTIAGATYCLSFA, AIGMLVSVAAALTLAPAIIAI, WPGPILATSVALALVGLLALP, YDILIVGIAAVCLVFIVMLMI, LVIVGTVLLSLGTAFGLSVLI, FVGLQVHWTIVAMSVIVLLAV, AMAGTGAVVTSAGLVFAFTMA, and RVIGQVGTTIGLGLLFDTLVV.

This sequence belongs to the resistance-nodulation-cell division (RND) (TC 2.A.6) family. MmpL subfamily.

Its subcellular location is the cell membrane. The chain is Probable transport protein MmpL9 (mmpL9) from Mycobacterium tuberculosis (strain ATCC 25618 / H37Rv).